A 1201-amino-acid chain; its full sequence is DNA-directed RNA polymerase subunit beta' (1201 aa).

Zn(2+)-binding residues include C60, C62, C75, and C78. 3 residues coordinate Mg(2+): D449, D451, and D453. C818, C892, C899, and C902 together coordinate Zn(2+).

This sequence belongs to the RNA polymerase beta' chain family. In terms of assembly, the RNAP catalytic core consists of 2 alpha, 1 beta, 1 beta' and 1 omega subunit. When a sigma factor is associated with the core the holoenzyme is formed, which can initiate transcription. Requires Mg(2+) as cofactor. It depends on Zn(2+) as a cofactor.

It carries out the reaction RNA(n) + a ribonucleoside 5'-triphosphate = RNA(n+1) + diphosphate. DNA-dependent RNA polymerase catalyzes the transcription of DNA into RNA using the four ribonucleoside triphosphates as substrates. This chain is DNA-directed RNA polymerase subunit beta', found in Listeria monocytogenes serovar 1/2a (strain ATCC BAA-679 / EGD-e).